A 147-amino-acid polypeptide reads, in one-letter code: SsrA-binding protein (147 aa).

This sequence belongs to the SmpB family.

It localises to the cytoplasm. Required for rescue of stalled ribosomes mediated by trans-translation. Binds to transfer-messenger RNA (tmRNA), required for stable association of tmRNA with ribosomes. tmRNA and SmpB together mimic tRNA shape, replacing the anticodon stem-loop with SmpB. tmRNA is encoded by the ssrA gene; the 2 termini fold to resemble tRNA(Ala) and it encodes a 'tag peptide', a short internal open reading frame. During trans-translation Ala-aminoacylated tmRNA acts like a tRNA, entering the A-site of stalled ribosomes, displacing the stalled mRNA. The ribosome then switches to translate the ORF on the tmRNA; the nascent peptide is terminated with the 'tag peptide' encoded by the tmRNA and targeted for degradation. The ribosome is freed to recommence translation, which seems to be the essential function of trans-translation. The chain is SsrA-binding protein from Mycoplasmopsis agalactiae (strain NCTC 10123 / CIP 59.7 / PG2) (Mycoplasma agalactiae).